A 443-amino-acid polypeptide reads, in one-letter code: Protein king tubby (443 aa).

Disordered stretches follow at residues 57 to 80 and 98 to 191; these read TNGSPGGINSVAMNTSRNHSNNMR and HELE…EGDV. Residues 67–80 are compositionally biased toward polar residues; the sequence is VAMNTSRNHSNNMR. A compositionally biased stretch (low complexity) spans 113-128; that stretch reads QQQQSASHSANSTQSQ. Residue serine 136 is modified to Phosphoserine. Over residues 177 to 186 the composition is skewed to gly residues; sequence NGTGNGTGGE.

It belongs to the TUB family.

Its subcellular location is the cytoplasm. It is found in the nucleus. It localises to the cell projection. The protein localises to the cilium membrane. The protein resides in the rhabdomere. The sequence is that of Protein king tubby from Drosophila sechellia (Fruit fly).